The sequence spans 266 residues: MSANILVFDSGVGGLSILAAVREQLPSANYCYLFDNARLPYGELDEQELIQGCVTLISQAVIQCQADIVVVACNSASTLILPALRACLKVPVVGVVPAIKPAAALSQKKHLGLLATPGTVNRQYTQDLIDQFASDCRVDRFGSSELVYLAEDKMAQRPVDSEALHRILAPIKASGLDTLILGCTHFPILREELQSYLGEGVHLLDSSNAIAARVVSLLEPSMSGEIGKSQALYTTDSICEGLRKTLAAWGFRSATAFRDSLMPIGS.

Substrate-binding positions include aspartate 9 to serine 10 and tyrosine 41 to glycine 42. Cysteine 73 acts as the Proton donor/acceptor in catalysis. Asparagine 74 to serine 75 serves as a coordination point for substrate. The active-site Proton donor/acceptor is the cysteine 183. Threonine 184 to histidine 185 provides a ligand contact to substrate.

The protein belongs to the aspartate/glutamate racemases family.

The enzyme catalyses L-glutamate = D-glutamate. It functions in the pathway cell wall biogenesis; peptidoglycan biosynthesis. Provides the (R)-glutamate required for cell wall biosynthesis. In Shewanella loihica (strain ATCC BAA-1088 / PV-4), this protein is Glutamate racemase.